The primary structure comprises 304 residues: Small ribosomal subunit protein uS3 (304 aa).

The KH type-2 domain occupies 17–86; the sequence is IDEFFAEELG…DPQVDVQEVD (70 aa). A disordered region spans residues 216–304; that stretch reads LLEGEPEDSE…DEMDEEGDDE (89 aa).

This sequence belongs to the universal ribosomal protein uS3 family. In terms of assembly, part of the 30S ribosomal subunit.

Its function is as follows. Binds the lower part of the 30S subunit head. This is Small ribosomal subunit protein uS3 from Haloarcula marismortui (strain ATCC 43049 / DSM 3752 / JCM 8966 / VKM B-1809) (Halobacterium marismortui).